We begin with the raw amino-acid sequence, 239 residues long: DnaA regulatory inactivator Hda (239 aa).

It belongs to the DnaA family. HdA subfamily. As to quaternary structure, the active form seems to be an ADP-bound monomer. Forms the RIDA complex (regulatory inactivation of DnaA) of ATP-DnaA, ADP-Hda and the DNA-loaded beta sliding clamp (dnaN).

Mediates the interaction of DNA replication initiator protein DnaA with DNA polymerase subunit beta sliding clamp (dnaN). Stimulates hydrolysis of ATP-DnaA to ADP-DnaA, rendering DnaA inactive for reinitiation, a process called regulatory inhibition of DnaA or RIDA. This chain is DnaA regulatory inactivator Hda, found in Yersinia enterocolitica serotype O:8 / biotype 1B (strain NCTC 13174 / 8081).